Reading from the N-terminus, the 182-residue chain is Rhodanese-like domain-containing protein 15, chloroplastic (182 aa).

Residues 1 to 65 constitute a chloroplast transit peptide; the sequence is METTAFNTTS…TTSRGNVAAE (65 aa). The region spanning 82–182 is the Rhodanese domain; the sequence is AQAGYRYLDV…WTENELPVEE (101 aa). Catalysis depends on cysteine 142, which acts as the Cysteine persulfide intermediate.

It localises to the plastid. The protein localises to the chloroplast. Its subcellular location is the thylakoid. This chain is Rhodanese-like domain-containing protein 15, chloroplastic (STR15), found in Arabidopsis thaliana (Mouse-ear cress).